Reading from the N-terminus, the 238-residue chain is Ribonuclease 3 (238 aa).

The RNase III domain occupies 10 to 139 (FKQFQEQTGI…FIGALYLDQG (130 aa)). Glutamate 52 provides a ligand contact to Mg(2+). The active site involves aspartate 56. Mg(2+) contacts are provided by aspartate 125 and glutamate 128. Glutamate 128 is a catalytic residue. The 70-residue stretch at 165–234 (DYKSQLQEFV…AQMALAKLKQ (70 aa)) folds into the DRBM domain.

Belongs to the ribonuclease III family. In terms of assembly, homodimer. Mg(2+) is required as a cofactor.

It is found in the cytoplasm. It carries out the reaction Endonucleolytic cleavage to 5'-phosphomonoester.. Its function is as follows. Digests double-stranded RNA. Involved in the processing of primary rRNA transcript to yield the immediate precursors to the large and small rRNAs (23S and 16S). Processes some mRNAs, and tRNAs when they are encoded in the rRNA operon. Processes pre-crRNA and tracrRNA of type II CRISPR loci if present in the organism. The sequence is that of Ribonuclease 3 from Anoxybacillus flavithermus (strain DSM 21510 / WK1).